The following is a 1111-amino-acid chain: Nuclear migration and anchoring protein unc-84 (1111 aa).

Over 1–509 (MAPATEADNN…LTDKKSSKFS (509 aa)) the chain is Nuclear. 2 required for nuclear envelope localization regions span residues 118-244 (YILR…SQTL) and 503-507 (KKSSK). A disordered region spans residues 232–253 (ERASRMTTRSQTLERSRKFDGL). Basic and acidic residues predominate over residues 243–252 (TLERSRKFDG). The chain crosses the membrane as a helical span at residues 510 to 530 (WCQILGLLLALLFAIFLLGFL). Over 531–1111 (TSDNTAIRVK…LRVHGKVVQV (581 aa)) the chain is Perinuclear space. Residues 912-1111 (QYDKNHLEAI…LRVHGKVVQV (200 aa)) form an interaction with zyg-12 region. The 165-residue stretch at 945 to 1109 (GGAVVSTRCS…YRLRVHGKVV (165 aa)) folds into the SUN domain.

As to quaternary structure, component of the unc-83-unc-84 LINC complex which contains at least unc-83 and unc-84. Within the unc-83-unc-84 LINC complex interacts (via C-terminus) with unc-83; the interaction is probably required to recruit unc-83 to the nuclear membrane. Most likely interacts with anc-1; the interaction is probably required to recruit anc-1 to the nuclear envelope. Interacts (via C-terminus) with zyg-12 (via C-terminus); the interaction is direct. May interact with lmn-1; this interaction may be required to complete the connection between the nuclear lamina and the cytoskeleton. As to expression, expressed in all somatic cells. Not expressed in germ cells in the mitotic and transition zones of the gonad. One study shows expression at the beginning of the late pachytene stage in the proximal gonad, but there is no expression in the male germline, suggesting expression is specific to oogenesis in hermaphrodites.

The protein resides in the nucleus inner membrane. It is found in the cytoplasm. Its subcellular location is the cytoskeleton. Its function is as follows. Involved in nuclear migration and anchoring in hypodermal precursor cells. Most likely recruits anc-1 to the nuclear envelope where anc-1 functions to tether the nucleus to the actin cytoskeleton. Component of the unc-83-unc-84 LINC (LInker of Nucleoskeleton and Cytoskeleton) complex where it recruits and interacts with unc-83 to form a bridge connecting the nuclear envelope to the cytoskeleton which allows for nuclear transport along microtubules. Its role in nuclear migration may be in association with lamin, lmn-1. Regulates nuclear migrations in one-cell embryos, controlling the posterior migration of the male pronucleus following fertilization. Not required for centrosome attachment to the nucleus. Plays a role in the maintenance of the nuclear envelope architecture in body wall muscle cells. May be involved in DNA damage repair through an association with zyg-12. Potentially has roles in homologous recombination, double strand break repair and meiotic recombination. Specifically, may in part inhibit non-homologous end joining repair, most likely through recruiting fan-1 to the nucleoplasm, to facilitate the repair of DNA cross-links. This chain is Nuclear migration and anchoring protein unc-84, found in Caenorhabditis elegans.